Reading from the N-terminus, the 283-residue chain is ATP phosphoribosyltransferase (283 aa).

This sequence belongs to the ATP phosphoribosyltransferase family. Long subfamily. Mg(2+) is required as a cofactor.

It is found in the cytoplasm. The enzyme catalyses 1-(5-phospho-beta-D-ribosyl)-ATP + diphosphate = 5-phospho-alpha-D-ribose 1-diphosphate + ATP. Its pathway is amino-acid biosynthesis; L-histidine biosynthesis; L-histidine from 5-phospho-alpha-D-ribose 1-diphosphate: step 1/9. With respect to regulation, feedback inhibited by histidine. Functionally, catalyzes the condensation of ATP and 5-phosphoribose 1-diphosphate to form N'-(5'-phosphoribosyl)-ATP (PR-ATP). Has a crucial role in the pathway because the rate of histidine biosynthesis seems to be controlled primarily by regulation of HisG enzymatic activity. The polypeptide is ATP phosphoribosyltransferase (Bifidobacterium longum (strain NCC 2705)).